A 535-amino-acid chain; its full sequence is Genetic interactor of prohibitins 3, mitochondrial (535 aa).

The N-terminal 38 residues, 1-38 (MLPVSRLCVRSSLRKLVFVRFVSCTSCGVTLQNNNVRG), are a transit peptide targeting the mitochondrion. One can recognise a CP-type G domain in the interval 111–283 (MQEVYRHVPA…INDLPGYSTN (173 aa)).

It belongs to the TRAFAC class YlqF/YawG GTPase family. GEP3 subfamily.

Its subcellular location is the mitochondrion. Functionally, may be involved in the mitochondrial lipid metabolism. The sequence is that of Genetic interactor of prohibitins 3, mitochondrial (GEP3) from Lachancea thermotolerans (strain ATCC 56472 / CBS 6340 / NRRL Y-8284) (Yeast).